A 144-amino-acid polypeptide reads, in one-letter code: Large ribosomal subunit protein uL15 (144 aa).

The disordered stretch occupies residues 20-49 (GRGIGSGLGKTGGRGHKGQKSRSGGFHKVG). The segment covering 21–31 (RGIGSGLGKTG) has biased composition (gly residues).

Belongs to the universal ribosomal protein uL15 family. As to quaternary structure, part of the 50S ribosomal subunit.

In terms of biological role, binds to the 23S rRNA. This chain is Large ribosomal subunit protein uL15, found in Neisseria gonorrhoeae (strain ATCC 700825 / FA 1090).